Here is a 128-residue protein sequence, read N- to C-terminus: UPF0325 protein YaeH (128 aa).

The protein belongs to the UPF0325 family.

This Shigella boydii serotype 18 (strain CDC 3083-94 / BS512) protein is UPF0325 protein YaeH.